The chain runs to 201 residues: HTH-type transcriptional regulator Hpr (201 aa).

In terms of domain architecture, HTH marR-type spans alanine 13–glycine 157. Positions isoleucine 63–glutamate 86 form a DNA-binding region, H-T-H motif.

In terms of assembly, homodimer.

Negative regulator of protease production and sporulation. This Geobacillus sp. (strain WCH70) protein is HTH-type transcriptional regulator Hpr.